The primary structure comprises 85 residues: Phycobilisome 9.7 kDa linker polypeptide, phycocyanin-associated, rod (85 aa).

A CpcD-like domain is found at 16 to 74 (NRVFVYEVEGLRQNEQTDNNRYQIRNSSTIEIQVPYSRMNEEDRRITRLGGRIVNIRPA).

This sequence belongs to the phycobilisome linker protein family.

The protein localises to the cellular thylakoid membrane. In terms of biological role, rod linker protein, associated with phycocyanin. Linker polypeptides determine the state of aggregation and the location of the disk-shaped phycobiliprotein units within the phycobilisome and modulate their spectroscopic properties in order to mediate a directed and optimal energy transfer. The sequence is that of Phycobilisome 9.7 kDa linker polypeptide, phycocyanin-associated, rod (cpcD2) from Microchaete diplosiphon (Fremyella diplosiphon).